A 159-amino-acid polypeptide reads, in one-letter code: Endoribonuclease YbeY (159 aa).

Zn(2+) is bound by residues H114, H118, and H124.

The protein belongs to the endoribonuclease YbeY family. Zn(2+) serves as cofactor.

It localises to the cytoplasm. Single strand-specific metallo-endoribonuclease involved in late-stage 70S ribosome quality control and in maturation of the 3' terminus of the 16S rRNA. This is Endoribonuclease YbeY from Pectobacterium atrosepticum (strain SCRI 1043 / ATCC BAA-672) (Erwinia carotovora subsp. atroseptica).